The chain runs to 27 residues: M-ectatotoxin-Eb2a (27 aa).

Expressed by the venom gland.

The protein localises to the secreted. In terms of biological role, antimicrobial peptide forming an alpha-helix in watery and membraneous environments, enabling it to perforate membranes. Active against Gram-negative bacteria E.coli DH5alpha (MIC=5 uM), E.coli MH1 (MIC=0.6 uM) and P.aeruginosa PAO1 (MIC=10 uM) and against Gram-positive bacteria B.subtilis VKM B-501 (MIC=0.6 uM) and A.globiformis VKM Ac-1112 (MIC=0.2 uM). Has cytolytic and hemolytic activity. This Ectatomma brunneum (Ant) protein is M-ectatotoxin-Eb2a.